The primary structure comprises 240 residues: Ubiquinone biosynthesis O-methyltransferase (240 aa).

Residues R36, G66, D87, and M129 each coordinate S-adenosyl-L-methionine.

This sequence belongs to the methyltransferase superfamily. UbiG/COQ3 family.

It catalyses the reaction a 3-demethylubiquinol + S-adenosyl-L-methionine = a ubiquinol + S-adenosyl-L-homocysteine + H(+). The enzyme catalyses a 3-(all-trans-polyprenyl)benzene-1,2-diol + S-adenosyl-L-methionine = a 2-methoxy-6-(all-trans-polyprenyl)phenol + S-adenosyl-L-homocysteine + H(+). It functions in the pathway cofactor biosynthesis; ubiquinone biosynthesis. In terms of biological role, O-methyltransferase that catalyzes the 2 O-methylation steps in the ubiquinone biosynthetic pathway. The sequence is that of Ubiquinone biosynthesis O-methyltransferase from Pelagibacter ubique (strain HTCC1062).